Reading from the N-terminus, the 312-residue chain is Serine/threonine-protein phosphatase PP2A catalytic subunit (312 aa).

The Mn(2+) site is built by aspartate 60, histidine 62, aspartate 88, and asparagine 120. The active-site Proton donor is the histidine 121. Residues histidine 170 and histidine 244 each coordinate Mn(2+).

The protein belongs to the PPP phosphatase family. PP-2A subfamily. Mn(2+) serves as cofactor.

The protein resides in the cytoplasm. The enzyme catalyses O-phospho-L-seryl-[protein] + H2O = L-seryl-[protein] + phosphate. It catalyses the reaction O-phospho-L-threonyl-[protein] + H2O = L-threonyl-[protein] + phosphate. The chain is Serine/threonine-protein phosphatase PP2A catalytic subunit from Nicotiana tabacum (Common tobacco).